The sequence spans 373 residues: MTDNSKIRVVVGMSGGVDSSVTALLLKEQGYDVIGVFMKNWDDTDEFGVCTATEDYKDVAAVADKIGIPYYSVNFEKEYWDRVFEYFLAEYRAGRTPNPDVMCNKEIKFKAFLDYAMTLGADYVATGHYAQVKRDENGTVHMLRGADNGKDQTYFLSQLSQEQLQKTLFPLGHLQKSEVREIAERAGLATAKKKDSTGICFIGEKNFKQFLSQYLPAQKGRMMTIDGRDMGEHAGLMYYTIGQRGGLGIGGQHGGDNQPWFVVGKDLSQNILYVGQGFYHEALMSNSLDASVIHFTREMPEEFTFECTAKFRYRQPDSHVAVHVRGDKAEVVFAEPQRAITPGQAVVFYDGKECLGGGMIDMAYKNGQPCQYI.

Residues 12–19 (GMSGGVDS) and M38 contribute to the ATP site. Positions 98 to 100 (NPD) are interaction with target base in tRNA. C103 serves as the catalytic Nucleophile. A disulfide bond links C103 and C200. Position 127 (G127) interacts with ATP. The interaction with tRNA stretch occupies residues 150–152 (KDQ). The active-site Cysteine persulfide intermediate is the C200. The interval 312 to 313 (RY) is interaction with tRNA.

Belongs to the MnmA/TRMU family.

It is found in the cytoplasm. The catalysed reaction is S-sulfanyl-L-cysteinyl-[protein] + uridine(34) in tRNA + AH2 + ATP = 2-thiouridine(34) in tRNA + L-cysteinyl-[protein] + A + AMP + diphosphate + H(+). Catalyzes the 2-thiolation of uridine at the wobble position (U34) of tRNA, leading to the formation of s(2)U34. The sequence is that of tRNA-specific 2-thiouridylase MnmA from Streptococcus pyogenes serotype M1.